The sequence spans 995 residues: Endosome/lysosome-associated apoptosis and autophagy regulator family member 2 (995 aa).

The first 21 residues, 1 to 21, serve as a signal peptide directing secretion; sequence MGVFCWSGCLVISLQLLLGAA. Topologically, residues 22-895 are extracellular; it reads LDNLSTCKEE…ACESIDFWLK (874 aa). Asn24, Asn136, Asn245, Asn372, Asn527, Asn649, Asn683, Asn700, and Asn758 each carry an N-linked (GlcNAc...) asparagine glycan. The MRH domain occupies 639 to 843; that stretch reads SECLVTYTNE…LWETAEACPL (205 aa). 2 cysteine pairs are disulfide-bonded: Cys641-Cys687 and Cys697-Cys725. Disulfide bonds link Cys793–Cys829 and Cys805–Cys841. Residue Asn883 is glycosylated (N-linked (GlcNAc...) asparagine). Residues 896–916 traverse the membrane as a helical segment; it reads VGAGVGAFTAVLLIALTCYFW. The Cytoplasmic segment spans residues 917–995; sequence KKNQKLEYKY…QLKSSRAQNI (79 aa).

Belongs to the ELAPOR family. Expressed in the animal half of the embryo during gastrulation, becoming restricted to the ventral ectoderm at stage 12.5. At the neurula stage, expressed in the anterior ectoderm surrounding the neural plate, and weakly in the epidermis. Expression is especially high in the presumptive hatching gland and cement gland regions. Surprisingly, by the tailbud stage (stage 22), expression is limited to the hatching gland and is not seen in the cement gland. Conversely, in tadpoles expressed broadly in the head, heart and fin. Expression in the head is seen in the primary mouth and in the brain, eyes, otic vesicles and olfactory pits.

The protein resides in the cell membrane. Its function is as follows. Functions as a regulator of the BMP signaling pathway and is involved in epidermal differentiation. This Xenopus laevis (African clawed frog) protein is Endosome/lysosome-associated apoptosis and autophagy regulator family member 2 (elapor2).